Consider the following 369-residue polypeptide: Queuine tRNA-ribosyltransferase (369 aa).

D89 serves as the catalytic Proton acceptor. Residues 89–93 (DSGGF), D142, Q184, and G211 each bind substrate. Positions 242–248 (GGGSPEL) are RNA binding. Residue D261 is the Nucleophile of the active site. The interval 266-270 (TRIAR) is RNA binding; important for wobble base 34 recognition. Residues C299, C301, C304, and H330 each contribute to the Zn(2+) site.

The protein belongs to the queuine tRNA-ribosyltransferase family. In terms of assembly, homodimer. Within each dimer, one monomer is responsible for RNA recognition and catalysis, while the other monomer binds to the replacement base PreQ1. It depends on Zn(2+) as a cofactor.

It carries out the reaction 7-aminomethyl-7-carbaguanine + guanosine(34) in tRNA = 7-aminomethyl-7-carbaguanosine(34) in tRNA + guanine. It functions in the pathway tRNA modification; tRNA-queuosine biosynthesis. Its function is as follows. Catalyzes the base-exchange of a guanine (G) residue with the queuine precursor 7-aminomethyl-7-deazaguanine (PreQ1) at position 34 (anticodon wobble position) in tRNAs with GU(N) anticodons (tRNA-Asp, -Asn, -His and -Tyr). Catalysis occurs through a double-displacement mechanism. The nucleophile active site attacks the C1' of nucleotide 34 to detach the guanine base from the RNA, forming a covalent enzyme-RNA intermediate. The proton acceptor active site deprotonates the incoming PreQ1, allowing a nucleophilic attack on the C1' of the ribose to form the product. After dissociation, two additional enzymatic reactions on the tRNA convert PreQ1 to queuine (Q), resulting in the hypermodified nucleoside queuosine (7-(((4,5-cis-dihydroxy-2-cyclopenten-1-yl)amino)methyl)-7-deazaguanosine). The chain is Queuine tRNA-ribosyltransferase from Thermotoga neapolitana (strain ATCC 49049 / DSM 4359 / NBRC 107923 / NS-E).